Reading from the N-terminus, the 503-residue chain is Glutamyl-tRNA(Gln) amidotransferase subunit A (503 aa).

Residues Lys-79 and Ser-154 each act as charge relay system in the active site. The active-site Acyl-ester intermediate is Ser-178.

Belongs to the amidase family. GatA subfamily. In terms of assembly, heterotrimer of A, B and C subunits.

It carries out the reaction L-glutamyl-tRNA(Gln) + L-glutamine + ATP + H2O = L-glutaminyl-tRNA(Gln) + L-glutamate + ADP + phosphate + H(+). Its function is as follows. Allows the formation of correctly charged Gln-tRNA(Gln) through the transamidation of misacylated Glu-tRNA(Gln) in organisms which lack glutaminyl-tRNA synthetase. The reaction takes place in the presence of glutamine and ATP through an activated gamma-phospho-Glu-tRNA(Gln). This chain is Glutamyl-tRNA(Gln) amidotransferase subunit A, found in Agathobacter rectalis (strain ATCC 33656 / DSM 3377 / JCM 17463 / KCTC 5835 / VPI 0990) (Eubacterium rectale).